Here is a 351-residue protein sequence, read N- to C-terminus: Geranylgeranyl pyrophosphate synthase (351 aa).

Isopentenyl diphosphate-binding residues include lysine 55, arginine 58, and glutamine 93. The Mg(2+) site is built by aspartate 100 and aspartate 104. Arginine 109 contributes to the dimethylallyl diphosphate binding site. Arginine 110 is an isopentenyl diphosphate binding site. Lysine 196, threonine 197, glutamine 236, lysine 253, and lysine 262 together coordinate dimethylallyl diphosphate.

The protein belongs to the FPP/GGPP synthase family. Interacts with fps1. Mg(2+) is required as a cofactor.

It is found in the cytoplasm. The protein localises to the nucleus. The enzyme catalyses isopentenyl diphosphate + dimethylallyl diphosphate = (2E)-geranyl diphosphate + diphosphate. The catalysed reaction is isopentenyl diphosphate + (2E)-geranyl diphosphate = (2E,6E)-farnesyl diphosphate + diphosphate. It carries out the reaction isopentenyl diphosphate + (2E,6E)-farnesyl diphosphate = (2E,6E,10E)-geranylgeranyl diphosphate + diphosphate. The protein operates within isoprenoid biosynthesis; farnesyl diphosphate biosynthesis; farnesyl diphosphate from geranyl diphosphate and isopentenyl diphosphate: step 1/1. It functions in the pathway isoprenoid biosynthesis; geranyl diphosphate biosynthesis; geranyl diphosphate from dimethylallyl diphosphate and isopentenyl diphosphate: step 1/1. Its pathway is isoprenoid biosynthesis; geranylgeranyl diphosphate biosynthesis; geranylgeranyl diphosphate from farnesyl diphosphate and isopentenyl diphosphate: step 1/1. Catalyzes the trans-addition of the 3 molecules of IPP onto DMAPP to form geranylgeranyl pyrophosphate. Required for the membrane attachment of ypt7 and rhb1. May be involved in vesicle trafficking and protein sorting. Required for forespore membrane formation. The sequence is that of Geranylgeranyl pyrophosphate synthase (spo9) from Schizosaccharomyces pombe (strain 972 / ATCC 24843) (Fission yeast).